A 470-amino-acid chain; its full sequence is Poly(A) polymerase catalytic subunit (470 aa).

Residues Asp192 and Asp194 contribute to the active site.

It belongs to the poxviridae poly(A) polymerase catalytic subunit family. As to quaternary structure, heterodimer of a large (catalytic) subunit and a small (regulatory) subunit.

It carries out the reaction RNA(n) + ATP = RNA(n)-3'-adenine ribonucleotide + diphosphate. In terms of biological role, polymerase that creates the 3'-poly(A) tail of mRNA's. The chain is Poly(A) polymerase catalytic subunit (PAPL) from Deerpox virus (strain Mule deer/United States/W-848-83/1983) (DPV).